The primary structure comprises 448 residues: Probable glycine dehydrogenase (decarboxylating) subunit 1 (448 aa).

Belongs to the GcvP family. N-terminal subunit subfamily. As to quaternary structure, the glycine cleavage system is composed of four proteins: P, T, L and H. In this organism, the P 'protein' is a heterodimer of two subunits.

It catalyses the reaction N(6)-[(R)-lipoyl]-L-lysyl-[glycine-cleavage complex H protein] + glycine + H(+) = N(6)-[(R)-S(8)-aminomethyldihydrolipoyl]-L-lysyl-[glycine-cleavage complex H protein] + CO2. Its function is as follows. The glycine cleavage system catalyzes the degradation of glycine. The P protein binds the alpha-amino group of glycine through its pyridoxal phosphate cofactor; CO(2) is released and the remaining methylamine moiety is then transferred to the lipoamide cofactor of the H protein. The polypeptide is Probable glycine dehydrogenase (decarboxylating) subunit 1 (Thermomicrobium roseum (strain ATCC 27502 / DSM 5159 / P-2)).